Consider the following 181-residue polypeptide: MAADAKNLIWIDLEMTGLEPEVDRILEIATLVTDQDLNILAQGPVIAIHQSDEVLAAMDDWNQQHHGASGLIERVRSSQYTEADAIAQTIDFLSLHVPKGVSPMCGNSVGQDRRFLNKYMRELEDFFHYRNIDVSTIKELVKRWDPEVMKGFKKQGTHQALLDIQESIAELQFYRDKVFKI.

The Exonuclease domain occupies Leu-8–Leu-171. Tyr-129 is a catalytic residue.

It belongs to the oligoribonuclease family.

The protein resides in the cytoplasm. Its function is as follows. 3'-to-5' exoribonuclease specific for small oligoribonucleotides. This is Oligoribonuclease from Shewanella amazonensis (strain ATCC BAA-1098 / SB2B).